The primary structure comprises 359 residues: Nicotinate-nucleotide--dimethylbenzimidazole phosphoribosyltransferase (359 aa).

Catalysis depends on Glu-318, which acts as the Proton acceptor.

The protein belongs to the CobT family. As to quaternary structure, homodimer.

The enzyme catalyses 5,6-dimethylbenzimidazole + nicotinate beta-D-ribonucleotide = alpha-ribazole 5'-phosphate + nicotinate + H(+). It participates in nucleoside biosynthesis; alpha-ribazole biosynthesis; alpha-ribazole from 5,6-dimethylbenzimidazole: step 1/2. Its function is as follows. Catalyzes the synthesis of alpha-ribazole-5'-phosphate from nicotinate mononucleotide (NAMN) and 5,6-dimethylbenzimidazole (DMB). In Escherichia coli O157:H7, this protein is Nicotinate-nucleotide--dimethylbenzimidazole phosphoribosyltransferase.